The chain runs to 807 residues: Glycerol-3-phosphate acyltransferase (807 aa).

Positions 305-310 (CHRSHM) match the HXXXXD motif motif.

Belongs to the GPAT/DAPAT family.

It is found in the cell inner membrane. The enzyme catalyses sn-glycerol 3-phosphate + an acyl-CoA = a 1-acyl-sn-glycero-3-phosphate + CoA. It participates in phospholipid metabolism; CDP-diacylglycerol biosynthesis; CDP-diacylglycerol from sn-glycerol 3-phosphate: step 1/3. The protein is Glycerol-3-phosphate acyltransferase of Aliivibrio fischeri (strain MJ11) (Vibrio fischeri).